Reading from the N-terminus, the 97-residue chain is Exodeoxyribonuclease 7 small subunit (97 aa).

The interval 64-97 is disordered; the sequence is NGQLHPAEEKGDDVSNNGVQNQGYKSQFLDGDVF. Polar residues predominate over residues 77–88; that stretch reads VSNNGVQNQGYK.

The protein belongs to the XseB family. Heterooligomer composed of large and small subunits.

The protein resides in the cytoplasm. It carries out the reaction Exonucleolytic cleavage in either 5'- to 3'- or 3'- to 5'-direction to yield nucleoside 5'-phosphates.. Bidirectionally degrades single-stranded DNA into large acid-insoluble oligonucleotides, which are then degraded further into small acid-soluble oligonucleotides. This Limosilactobacillus fermentum (strain NBRC 3956 / LMG 18251) (Lactobacillus fermentum) protein is Exodeoxyribonuclease 7 small subunit.